The following is a 605-amino-acid chain: Glutamine--fructose-6-phosphate aminotransferase [isomerizing] (605 aa).

The active-site Nucleophile; for GATase activity is the C2. Residues 2–219 (CGIVGVVGSK…DKELVVLTKD (218 aa)) form the Glutamine amidotransferase type-2 domain. SIS domains lie at 285–424 (IIKG…AEGE) and 457–595 (VADL…VDKP). K600 functions as the For Fru-6P isomerization activity in the catalytic mechanism.

In terms of assembly, homodimer.

It is found in the cytoplasm. It carries out the reaction D-fructose 6-phosphate + L-glutamine = D-glucosamine 6-phosphate + L-glutamate. Functionally, catalyzes the first step in hexosamine metabolism, converting fructose-6P into glucosamine-6P using glutamine as a nitrogen source. This is Glutamine--fructose-6-phosphate aminotransferase [isomerizing] from Lactococcus lactis subsp. lactis (strain IL1403) (Streptococcus lactis).